The chain runs to 236 residues: Kinetochore protein Spc25 (236 aa).

Residues 44–106 are a coiled coil; sequence KNIISAKEAI…DMEAQLLRHT (63 aa). Residues 194 to 217 are disordered; sequence EVAGASPVTPSGSERPKATSKHSN.

The protein belongs to the SPC25 family. Component of the Ndc80 complex, which is composed of Ndc80, Nuf2 and Spc25.

Its subcellular location is the nucleus. It localises to the chromosome. It is found in the centromere. The protein resides in the kinetochore. Its function is as follows. Acts as a component of the essential kinetochore-associated Ndc80 complex, which is required for chromosome segregation and spindle checkpoint activity during meiosis and mitosis. Required for kinetochore integrity and the organization of stable microtubule binding sites in the outer plate of the kinetochore. Participates in SAC signaling that responds specifically to disruptions in spindle microtubule dynamics. The NDC80 complex synergistically enhances the affinity of the SKA1 complex for microtubules and may allow the NDC80 complex to track depolymerizing microtubules. The chain is Kinetochore protein Spc25 from Drosophila persimilis (Fruit fly).